The sequence spans 685 residues: DNA ligase (685 aa).

NAD(+) contacts are provided by residues 39-43, 88-89, and glutamate 119; these read DGEYD and SL. The active-site N6-AMP-lysine intermediate is the lysine 121. Positions 142, 182, 302, and 326 each coordinate NAD(+). Positions 420, 423, 438, and 443 each coordinate Zn(2+). Residues 606–685 form the BRCT domain; it reads DNATFFSEKR…QTFLEHLDRG (80 aa).

Belongs to the NAD-dependent DNA ligase family. LigA subfamily. Mg(2+) serves as cofactor. Requires Mn(2+) as cofactor.

It catalyses the reaction NAD(+) + (deoxyribonucleotide)n-3'-hydroxyl + 5'-phospho-(deoxyribonucleotide)m = (deoxyribonucleotide)n+m + AMP + beta-nicotinamide D-nucleotide.. Its function is as follows. DNA ligase that catalyzes the formation of phosphodiester linkages between 5'-phosphoryl and 3'-hydroxyl groups in double-stranded DNA using NAD as a coenzyme and as the energy source for the reaction. It is essential for DNA replication and repair of damaged DNA. This is DNA ligase from Desulforapulum autotrophicum (strain ATCC 43914 / DSM 3382 / VKM B-1955 / HRM2) (Desulfobacterium autotrophicum).